Here is an 804-residue protein sequence, read N- to C-terminus: MNYNHNQIEKKWQDYWDENKTFKTNDNLGQKKFYALDMFPYPSGAGLHVGHPEGYTATDIISRYKRMQGYNVLHPMGWDAFGLPAEQYALDTGNDPREFTKKNIQTFKRQIKELGFSYDWDREVNTTDPEYYKWTQWIFIQLYNKGLAYVDEVAVNWCPALGTVLSNEEVIDGVSERGGHPVYRKPMKQWVLKITEYADQLLADLDDLDWPESLKDMQRNWIGRSEGAKVSFDVDNTEGKVEVFTTRPDTIYGASFLVLSPEHALVNSITTDEYKEKVKAYQTEASKKSDLERTDLAKDKSGVFTGAYAINPLSGEKVQIWIADYVLSTYGTGAIMAVPAHDDRDYEFAKKFDLLIIEVIEGGNVEEAAYTGEGKHINSGELDGLENEAAITKAIQLLEQKGAGEKKVNYKLRDWLFSRQRYWGEPIPVIHWEDGTMTTVPEEELPLLLPETDEIKPSGTGESPLANIDSFVNVVDEKTGMKGRRETNTMPQWAGSCWYYLRYIDPKNENMLADPEKLKHWLPVDLYIGGVEHAVLHLLYARFWHKVLYDLGIVPTKEPFQKLFNQGMILGEGNEKMSKSKGNVINPDDIVQSHGADTLRLYEMFMGPLDAAIAWSEKGLDGSRRFLDRVWRLIVNEDGTLSSKIVTTNNKSLDKVYNQTVKKVTDDFETLGFNTAISQLMVFINECYKVDEVYKPYIEGFVKMLAPIAPHIGEELWSKLGHEESITYQPWPTYDEALLVDDEVEIVVQVNGKLRAKIKIAKDTSKEEMQEIALSNDNVKASIEGKDIMKVIAVPQKLVNIVAK.

The 'HIGH' region motif lies at 40–51; the sequence is PYPSGAGLHVGH. A 'KMSKS' region motif is present at residues 576 to 580; that stretch reads KMSKS. Position 579 (Lys-579) interacts with ATP.

It belongs to the class-I aminoacyl-tRNA synthetase family.

It is found in the cytoplasm. The catalysed reaction is tRNA(Leu) + L-leucine + ATP = L-leucyl-tRNA(Leu) + AMP + diphosphate. The protein is Leucine--tRNA ligase of Staphylococcus aureus (strain bovine RF122 / ET3-1).